We begin with the raw amino-acid sequence, 213 residues long: MDGKFISFEGPDGAGKTSVIQQIQLELEDQLGTEKVMYTREPGGNKISEQIRQVLFDGQNTDMDGRTEALLFAAARRQHIVSEIIPGLKAGKVILCDRFVDSSIAYQGAGRGLGEKEIWQINQFAIDGLMPALTIYLDIESEIGLKRIAEHRSNQVNRLDEEKLEFHRTVRQSYLKLYQNYPERIELIDASQPLEKVIEDVKATIHDRFSDLF.

10–17 (GPDGAGKT) is a binding site for ATP.

It belongs to the thymidylate kinase family.

The catalysed reaction is dTMP + ATP = dTDP + ADP. Its function is as follows. Phosphorylation of dTMP to form dTDP in both de novo and salvage pathways of dTTP synthesis. This chain is Thymidylate kinase, found in Limosilactobacillus reuteri (strain DSM 20016) (Lactobacillus reuteri).